The following is a 267-amino-acid chain: MSDILQKILAVKAEEVAAARKHRDLPSVRAEAEANRSDSTLRARGFARAMRDKIAAGNAAVIAEVKKASPSKGVLRPNFKPADIARSYAEHGAACLSVLTDEQFFQGHADYLREARAACTLPVLRKDFMVDLYQVYEARSWGADCILLIVAALDQGLMEELEACALELGMDVLVEVHDGHELDRALRLQTPLVGVNNRNLRTFETTLDTTLGLLKHMPDDRIVVTESGILTPDDVRKMRAAAVNAFLVGEAFMRADDPGAELARLFA.

This sequence belongs to the TrpC family.

The catalysed reaction is 1-(2-carboxyphenylamino)-1-deoxy-D-ribulose 5-phosphate + H(+) = (1S,2R)-1-C-(indol-3-yl)glycerol 3-phosphate + CO2 + H2O. Its pathway is amino-acid biosynthesis; L-tryptophan biosynthesis; L-tryptophan from chorismate: step 4/5. The chain is Indole-3-glycerol phosphate synthase from Ralstonia pickettii (strain 12J).